The sequence spans 222 residues: Cytidylate kinase (222 aa).

Position 7-15 (7-15 (GPAGAGKST)) interacts with ATP.

Belongs to the cytidylate kinase family. Type 1 subfamily.

The protein localises to the cytoplasm. The enzyme catalyses CMP + ATP = CDP + ADP. The catalysed reaction is dCMP + ATP = dCDP + ADP. The chain is Cytidylate kinase from Carboxydothermus hydrogenoformans (strain ATCC BAA-161 / DSM 6008 / Z-2901).